The sequence spans 140 residues: Low calcium response locus protein T (140 aa).

This Yersinia pseudotuberculosis serotype I (strain IP32953) protein is Low calcium response locus protein T (lcrT).